Here is a 346-residue protein sequence, read N- to C-terminus: Histone PARylation factor 1 (346 aa).

Position 1 is an N-acetylmethionine (Met1). Basic residues predominate over residues Met1–Leu10. A disordered region spans residues Met1–Cys29. Lys19 bears the N6-acetyllysine mark. Residues Lys19 to Cys29 show a composition bias toward basic and acidic residues. Ser97 carries the ADP-ribosylserine modification. Residues Lys186 and Lys233 each carry the N6-acetyllysine modification. A PolyADP-ribosyl aspartic acid modification is found at Asp235. The residue at position 238 (Tyr238) is an ADP-ribosyltyrosine. At Glu240 the chain carries PolyADP-ribosyl glutamic acid. An interaction with PARP1 region spans residues Pro242–Ala346. The Proton donor role is filled by Glu284.

The protein belongs to the HPF1 family. As to quaternary structure, interacts with PARP1 (via the PARP catalytic domain). Interacts with PARP2 (via the PARP catalytic domain). Interacts with core nucleosomes in a PARP1- and PARP2-dependent manner.

The protein localises to the chromosome. It localises to the nucleus. Its function is as follows. Cofactor for serine ADP-ribosylation that confers serine specificity on PARP1 and PARP2 and plays a key role in DNA damage response. Initiates the repair of double-strand DNA breaks: recruited to DNA damage sites by PARP1 and PARP2 and switches the amino acid specificity of PARP1 and PARP2 from aspartate or glutamate to serine residues, licensing serine ADP-ribosylation of target proteins. Serine ADP-ribosylation of target proteins, such as histones, promotes decompaction of chromatin and the recruitment of repair factors leading to the reparation of DNA strand breaks. Serine ADP-ribosylation of proteins constitutes the primary form of ADP-ribosylation of proteins in response to DNA damage. HPF1 acts by completing the active site of PARP1 and PARP2: forms a composite active site composed of residues from HPF1 and PARP1 or PARP2. While HPF1 promotes the initiation of serine ADP-ribosylation, it restricts the polymerase activity of PARP1 and PARP2 in order to limit the length of poly-ADP-ribose chains. HPF1 also promotes tyrosine ADP-ribosylation, probably by conferring tyrosine specificity on PARP1. This is Histone PARylation factor 1 from Bos taurus (Bovine).